A 287-amino-acid polypeptide reads, in one-letter code: 4-hydroxybenzoate octaprenyltransferase (287 aa).

The next 6 helical transmembrane spans lie at 23 to 40 (IGSL…WLAG), 98 to 118 (ILFV…NKMT), 141 to 161 (LPQF…YAAV), 163 to 183 (ESLP…TVAY), 213 to 233 (IIIG…GNIT), and 235 to 255 (LGIP…YQQI).

Belongs to the UbiA prenyltransferase family. The cofactor is Mg(2+).

It is found in the cell inner membrane. The catalysed reaction is all-trans-octaprenyl diphosphate + 4-hydroxybenzoate = 4-hydroxy-3-(all-trans-octaprenyl)benzoate + diphosphate. The protein operates within cofactor biosynthesis; ubiquinone biosynthesis. Functionally, catalyzes the prenylation of para-hydroxybenzoate (PHB) with an all-trans polyprenyl group. Mediates the second step in the final reaction sequence of ubiquinone-8 (UQ-8) biosynthesis, which is the condensation of the polyisoprenoid side chain with PHB, generating the first membrane-bound Q intermediate 3-octaprenyl-4-hydroxybenzoate. In Pectobacterium atrosepticum (strain SCRI 1043 / ATCC BAA-672) (Erwinia carotovora subsp. atroseptica), this protein is 4-hydroxybenzoate octaprenyltransferase.